The primary structure comprises 419 residues: Peptide chain release factor subunit 1 (419 aa).

Belongs to the eukaryotic release factor 1 family. Heterodimer of two subunits, one of which binds GTP.

The protein resides in the cytoplasm. Directs the termination of nascent peptide synthesis (translation) in response to the termination codons UAA, UAG and UGA. The polypeptide is Peptide chain release factor subunit 1 (Methanococcus maripaludis (strain C6 / ATCC BAA-1332)).